Here is a 142-residue protein sequence, read N- to C-terminus: Hemoglobin subunit alpha-1 (142 aa).

Residues 2 to 142 enclose the Globin domain; it reads KLSADDKHNV…VGYVLASKYR (141 aa). O2 is bound at residue H59. H88 provides a ligand contact to heme b.

This sequence belongs to the globin family. Major hemoglobin is a heterotetramer of two alpha-1 chains and two beta-1 chains. In terms of tissue distribution, red blood cells.

In terms of biological role, involved in oxygen transport from the lung to the various peripheral tissues. The protein is Hemoglobin subunit alpha-1 of Triturus cristatus (Great crested newt).